A 390-amino-acid chain; its full sequence is Probable inactive secreted aspartyl protease (390 aa).

The signal sequence occupies residues 1–20 (MQLTIKALVGILTTISAATA). A propeptide spans 21-69 (VSFDMENLGAEKRGVSGEELHMLHGNEVLARFANGVYPEVANGTRVSKR) (removed in mature form). Asn-62 carries N-linked (GlcNAc...) asparagine glycosylation. The Peptidase A1 domain maps to 86 to 388 (WAVKAKIGSN…KFDSNEMQIA (303 aa)). Catalysis depends on residues Asp-104 and Asp-273. Cys-313 and Cys-346 are disulfide-bonded.

The protein belongs to the peptidase A1 family.

It localises to the secreted. Its function is as follows. Probable inactive secreted aspartyl protease. May promote an inflammatory immune response in the host when the host skin barrier is breached. Has no detectable protease activity in vitro on fluorogenic substrates, a peptide library, or with the general protease substrate casein. The presence of the enzyme also does not affect the activity of the secreted aspartyl protease SAP1. This chain is Probable inactive secreted aspartyl protease, found in Malassezia globosa (strain ATCC MYA-4612 / CBS 7966) (Dandruff-associated fungus).